The sequence spans 83 residues: Large ribosomal subunit protein bL31B (83 aa).

Belongs to the bacterial ribosomal protein bL31 family. Type B subfamily. As to quaternary structure, part of the 50S ribosomal subunit.

This Leifsonia xyli subsp. xyli (strain CTCB07) protein is Large ribosomal subunit protein bL31B.